The following is a 547-amino-acid chain: Chaperonin GroEL 2 (547 aa).

Residues 30 to 33 (TLGP), K51, 87 to 91 (DGTTT), G415, and D496 each bind ATP.

It belongs to the chaperonin (HSP60) family. Forms a cylinder of 14 subunits composed of two heptameric rings stacked back-to-back. Interacts with the co-chaperonin GroES.

The protein resides in the cytoplasm. The catalysed reaction is ATP + H2O + a folded polypeptide = ADP + phosphate + an unfolded polypeptide.. Functionally, together with its co-chaperonin GroES, plays an essential role in assisting protein folding. The GroEL-GroES system forms a nano-cage that allows encapsulation of the non-native substrate proteins and provides a physical environment optimized to promote and accelerate protein folding. This is Chaperonin GroEL 2 from Rhodopseudomonas palustris (strain ATCC BAA-98 / CGA009).